We begin with the raw amino-acid sequence, 408 residues long: LL-diaminopimelate aminotransferase (408 aa).

The substrate site is built by tyrosine 15 and glycine 42. Residues tyrosine 72, 108-109 (SK), tyrosine 132, asparagine 187, tyrosine 218, and 246-248 (SFS) each bind pyridoxal 5'-phosphate. The substrate site is built by lysine 109, tyrosine 132, and asparagine 187. Lysine 249 carries the post-translational modification N6-(pyridoxal phosphate)lysine. Arginine 257 and asparagine 292 together coordinate pyridoxal 5'-phosphate. The substrate site is built by asparagine 292 and arginine 388.

Belongs to the class-I pyridoxal-phosphate-dependent aminotransferase family. LL-diaminopimelate aminotransferase subfamily. Homodimer. The cofactor is pyridoxal 5'-phosphate.

It carries out the reaction (2S,6S)-2,6-diaminopimelate + 2-oxoglutarate = (S)-2,3,4,5-tetrahydrodipicolinate + L-glutamate + H2O + H(+). The protein operates within amino-acid biosynthesis; L-lysine biosynthesis via DAP pathway; LL-2,6-diaminopimelate from (S)-tetrahydrodipicolinate (aminotransferase route): step 1/1. Its function is as follows. Involved in the synthesis of meso-diaminopimelate (m-DAP or DL-DAP), required for both lysine and peptidoglycan biosynthesis. Catalyzes the direct conversion of tetrahydrodipicolinate to LL-diaminopimelate. This is LL-diaminopimelate aminotransferase from Leptospira borgpetersenii serovar Hardjo-bovis (strain JB197).